A 101-amino-acid chain; its full sequence is MIHKLTSEERKTQLESLHHWTAVPGRDAIQRSLRFADFNEAFGFMTRVAIKAQEMNHHPEWFNVYNRVDVTLSTHDANGLTERDIKLAHFIDEVGKHAKAA.

This sequence belongs to the pterin-4-alpha-carbinolamine dehydratase family.

The catalysed reaction is (4aS,6R)-4a-hydroxy-L-erythro-5,6,7,8-tetrahydrobiopterin = (6R)-L-erythro-6,7-dihydrobiopterin + H2O. In Burkholderia mallei (strain ATCC 23344), this protein is Putative pterin-4-alpha-carbinolamine dehydratase.